Here is a 252-residue protein sequence, read N- to C-terminus: Type II secretion system protein N (252 aa).

The Cytoplasmic segment spans residues 1–4 (MKRA). Residues 5-25 (VGYGLLFSTVLMTSVVVHLPA) form a helical membrane-spanning segment. Residues 26 to 252 (QVALSPLPLP…RYPFNQQGQL (227 aa)) lie on the Periplasmic side of the membrane.

The protein belongs to the GSP N family.

The protein resides in the cell inner membrane. Its function is as follows. Involved in a type II secretion system (T2SS, formerly general secretion pathway, GSP) for the export of proteins. Required for secretion of cholera toxin through the outer membrane. The sequence is that of Type II secretion system protein N (epsN) from Vibrio cholerae serotype O1 (strain ATCC 39315 / El Tor Inaba N16961).